Here is a 247-residue protein sequence, read N- to C-terminus: Eukaryotic translation initiation factor 6 (247 aa).

Phosphoserine; by CK1 is present on residues Ser-174 and Ser-175.

It belongs to the eIF-6 family. In terms of assembly, monomer. Associates with the 60S ribosomal subunit. In terms of processing, phosphorylation at Ser-174 and Ser-175 promotes nuclear export.

It localises to the cytoplasm. Its subcellular location is the nucleus. The protein resides in the nucleolus. Binds to the 60S ribosomal subunit and prevents its association with the 40S ribosomal subunit to form the 80S initiation complex in the cytoplasm. Is also involved in ribosome biogenesis. Associates with pre-60S subunits in the nucleus and is involved in its nuclear export. The polypeptide is Eukaryotic translation initiation factor 6 (tif6) (Emericella nidulans (strain FGSC A4 / ATCC 38163 / CBS 112.46 / NRRL 194 / M139) (Aspergillus nidulans)).